Reading from the N-terminus, the 355-residue chain is Nuclear speckle splicing regulatory protein 1 homolog (355 aa).

Residues 1–57 (MSGTGFRYGLNVMKKKKPNESSNRITFTEDDSSSSEQEHAPIPNSFSSQITAASDAS) form a disordered region. The segment covering 44 to 54 (NSFSSQITAAS) has biased composition (polar residues). A coiled-coil region spans residues 99–162 (MENLIESAKK…EDRKEEDEKS (64 aa)). Disordered stretches follow at residues 253–292 (SANN…HGTY) and 325–355 (KIHA…ATNP). Residues 280–289 (YHQDRPDKRH) are compositionally biased toward basic and acidic residues. The stretch at 293-326 (SLEEIDKQRKEFENRQRLQKEKEFQKSREAALKI) forms a coiled coil. Polar residues predominate over residues 329-339 (SRNTTETQVQS). A compositionally biased stretch (basic residues) spans 346-355 (QRKKKAATNP).

The protein belongs to the NSRP1 family.

The protein is Nuclear speckle splicing regulatory protein 1 homolog of Schizosaccharomyces pombe (strain 972 / ATCC 24843) (Fission yeast).